The chain runs to 228 residues: Ribonuclease 3 (228 aa).

In terms of domain architecture, RNase III spans 5–128; sequence LNRLMARLGY…IIGAMLLDGG (124 aa). Glutamate 41 is a binding site for Mg(2+). Aspartate 45 is a catalytic residue. Residues aspartate 114 and glutamate 117 each coordinate Mg(2+). Residue glutamate 117 is part of the active site. In terms of domain architecture, DRBM spans 155–225; the sequence is DAKTRLQEWL…ASLALEWLEQ (71 aa).

It belongs to the ribonuclease III family. Homodimer. Requires Mg(2+) as cofactor.

The protein resides in the cytoplasm. The catalysed reaction is Endonucleolytic cleavage to 5'-phosphomonoester.. Digests double-stranded RNA. Involved in the processing of primary rRNA transcript to yield the immediate precursors to the large and small rRNAs (23S and 16S). Processes some mRNAs, and tRNAs when they are encoded in the rRNA operon. Processes pre-crRNA and tracrRNA of type II CRISPR loci if present in the organism. The chain is Ribonuclease 3 from Alcanivorax borkumensis (strain ATCC 700651 / DSM 11573 / NCIMB 13689 / SK2).